The primary structure comprises 508 residues: Maturase K (508 aa).

The protein belongs to the intron maturase 2 family. MatK subfamily.

The protein localises to the plastid. The protein resides in the chloroplast. In terms of biological role, usually encoded in the trnK tRNA gene intron. Probably assists in splicing its own and other chloroplast group II introns. This chain is Maturase K, found in Ranunculus lingua (Greater spearwort).